Here is a 136-residue protein sequence, read N- to C-terminus: NADPH-dependent 7-cyano-7-deazaguanine reductase (136 aa).

Cys-50 functions as the Thioimide intermediate in the catalytic mechanism. Asp-57 functions as the Proton donor in the catalytic mechanism. Substrate is bound by residues 72–74 (YEL) and 91–92 (HE).

The protein belongs to the GTP cyclohydrolase I family. QueF type 1 subfamily.

It is found in the cytoplasm. It catalyses the reaction 7-aminomethyl-7-carbaguanine + 2 NADP(+) = 7-cyano-7-deazaguanine + 2 NADPH + 3 H(+). The protein operates within tRNA modification; tRNA-queuosine biosynthesis. Its function is as follows. Catalyzes the NADPH-dependent reduction of 7-cyano-7-deazaguanine (preQ0) to 7-aminomethyl-7-deazaguanine (preQ1). The sequence is that of NADPH-dependent 7-cyano-7-deazaguanine reductase from Prochlorococcus marinus (strain AS9601).